A 378-amino-acid chain; its full sequence is MFLLFFIVHWLKIMLPFFAQVGLEENLHETLDFTEKFLSGLENLQGLNEDDIQVGFTPKEAVYQEDKVILYRFQPVVENPLPIPVLIVYALVNRPYMVDLQEGRSLVANLLKLGLDVYLIDWGYPSRGDRWLTLEDYLSGYLNNCVDIICQRSQQEKITLLGVCQGGTFSLCYASLFPDKVKNLVVMVAPVDFEQPGTLLNARGGCTLGAEAVDIDLMVDAMGNIPGDYLNLEFLMLKPLQLGYQKYLDVPDIMGDEAKLLNFLRMEKWIFDSPDQAGETYRQFLKDFYQQNKLIKGEVMIGDRLVDLHNLTMPILNLYAEKDHLVAPASSLALGDYLPENCDYTVQSFPVGHIGMYVSGKVQRDLPPAIAHWLSERQ.

The region spanning 84-356 is the AB hydrolase-1 domain; it reads PVLIVYALVN…QSFPVGHIGM (273 aa).

The protein belongs to the PHA/PHB synthase family. Type III PhaC subfamily. As to quaternary structure, forms a heterodimer with PhaE, which may multimerize in the presence of 3-hydroxybutyryl-CoA. Both subunits are required for PHB synthesis in E.coli and in PHA-negative A.eutrophus.

It localises to the cytoplasm. The enzyme catalyses (3R)-3-hydroxybutanoyl-CoA + [(3R)-hydroxybutanoate](n) = [(3R)-hydroxybutanoate](n+1) + CoA. The protein operates within biopolymer metabolism; poly-(R)-3-hydroxybutanoate biosynthesis. When expressed in E.coli with Synechocystis PhaE and C.necator PhaA and PhaB, confers the ability to synthesize up to 13% (w/w) poly(3-hydroxybutyrate) (PHB) depending on the carbon source; all 4 genes are necessary for PHB production. Cell-free in vitro coexpression with PhaE gives a heterodimer able to polymerize 3-hydroxybutyrate-CoA. The polypeptide is Poly(3-hydroxyalkanoate) polymerase subunit PhaC (Synechocystis sp. (strain ATCC 27184 / PCC 6803 / Kazusa)).